The sequence spans 398 residues: S-adenosylmethionine synthase (398 aa).

His26 contributes to the ATP binding site. Asp28 provides a ligand contact to Mg(2+). Glu54 serves as a coordination point for K(+). Residues Glu67 and Gln110 each coordinate L-methionine. The flexible loop stretch occupies residues 110 to 120; it reads QSPDIAQGVNE. Residues 177–179, 243–244, Asp252, 258–259, Ala275, and Lys279 contribute to the ATP site; these read DAK, RF, and RK. Asp252 contributes to the L-methionine binding site. Position 283 (Lys283) interacts with L-methionine.

The protein belongs to the AdoMet synthase family. Homotetramer; dimer of dimers. Mg(2+) is required as a cofactor. Requires K(+) as cofactor.

It is found in the cytoplasm. The catalysed reaction is L-methionine + ATP + H2O = S-adenosyl-L-methionine + phosphate + diphosphate. Its pathway is amino-acid biosynthesis; S-adenosyl-L-methionine biosynthesis; S-adenosyl-L-methionine from L-methionine: step 1/1. Functionally, catalyzes the formation of S-adenosylmethionine (AdoMet) from methionine and ATP. The overall synthetic reaction is composed of two sequential steps, AdoMet formation and the subsequent tripolyphosphate hydrolysis which occurs prior to release of AdoMet from the enzyme. This chain is S-adenosylmethionine synthase, found in Desulfotalea psychrophila (strain LSv54 / DSM 12343).